The sequence spans 243 residues: Segregation and condensation protein A (243 aa).

The protein belongs to the ScpA family. In terms of assembly, component of a cohesin-like complex composed of ScpA, ScpB and the Smc homodimer, in which ScpA and ScpB bind to the head domain of Smc. The presence of the three proteins is required for the association of the complex with DNA.

It is found in the cytoplasm. Participates in chromosomal partition during cell division. May act via the formation of a condensin-like complex containing Smc and ScpB that pull DNA away from mid-cell into both cell halves. The chain is Segregation and condensation protein A from Staphylococcus aureus (strain NCTC 8325 / PS 47).